A 218-amino-acid polypeptide reads, in one-letter code: Glycerol-3-phosphate acyltransferase (218 aa).

6 consecutive transmembrane segments (helical) span residues 3-23 (FAIF…YWIA), 53-73 (GFPV…LSGI), 82-102 (FQLA…FLGF), 112-132 (LGVF…VFLV), 142-162 (IGSI…SILL), and 166-186 (EVSY…ILTH).

This sequence belongs to the PlsY family. As to quaternary structure, probably interacts with PlsX.

It localises to the cell inner membrane. The catalysed reaction is an acyl phosphate + sn-glycerol 3-phosphate = a 1-acyl-sn-glycero-3-phosphate + phosphate. Its pathway is lipid metabolism; phospholipid metabolism. Its function is as follows. Catalyzes the transfer of an acyl group from acyl-phosphate (acyl-PO(4)) to glycerol-3-phosphate (G3P) to form lysophosphatidic acid (LPA). This enzyme utilizes acyl-phosphate as fatty acyl donor, but not acyl-CoA or acyl-ACP. In Leptospira borgpetersenii serovar Hardjo-bovis (strain JB197), this protein is Glycerol-3-phosphate acyltransferase.